The following is a 510-amino-acid chain: Probable cytosol aminopeptidase (510 aa).

Mn(2+)-binding residues include lysine 268 and aspartate 273. Residue lysine 280 is part of the active site. The Mn(2+) site is built by aspartate 291, aspartate 350, and glutamate 352. Residue arginine 354 is part of the active site.

This sequence belongs to the peptidase M17 family. The cofactor is Mn(2+).

It localises to the cytoplasm. The catalysed reaction is Release of an N-terminal amino acid, Xaa-|-Yaa-, in which Xaa is preferably Leu, but may be other amino acids including Pro although not Arg or Lys, and Yaa may be Pro. Amino acid amides and methyl esters are also readily hydrolyzed, but rates on arylamides are exceedingly low.. The enzyme catalyses Release of an N-terminal amino acid, preferentially leucine, but not glutamic or aspartic acids.. In terms of biological role, presumably involved in the processing and regular turnover of intracellular proteins. Catalyzes the removal of unsubstituted N-terminal amino acids from various peptides. This Micrococcus luteus (strain ATCC 4698 / DSM 20030 / JCM 1464 / CCM 169 / CCUG 5858 / IAM 1056 / NBRC 3333 / NCIMB 9278 / NCTC 2665 / VKM Ac-2230) (Micrococcus lysodeikticus) protein is Probable cytosol aminopeptidase.